Here is a 102-residue protein sequence, read N- to C-terminus: MNSQNIRIRLKAFDHRILDASTREIVSTAKRTGANVRGPIPLPTRIEKFTVNRGPHIDKKSREQFEMRTHKRLLDIVDPTPQTVDALMKLDLSAGVDVEIKL.

This sequence belongs to the universal ribosomal protein uS10 family. As to quaternary structure, part of the 30S ribosomal subunit.

Its function is as follows. Involved in the binding of tRNA to the ribosomes. This is Small ribosomal subunit protein uS10 from Bartonella henselae (strain ATCC 49882 / DSM 28221 / CCUG 30454 / Houston 1) (Rochalimaea henselae).